A 225-amino-acid polypeptide reads, in one-letter code: PKHD-type hydroxylase YbiX (225 aa).

The region spanning 78–177 (TLSTPLFNRY…RVASFMWIQS (100 aa)) is the Fe2OG dioxygenase domain. Residues histidine 96, aspartate 98, and histidine 158 each contribute to the Fe cation site. Arginine 168 serves as a coordination point for 2-oxoglutarate.

It depends on Fe(2+) as a cofactor. L-ascorbate is required as a cofactor.

The sequence is that of PKHD-type hydroxylase YbiX from Escherichia coli O81 (strain ED1a).